Consider the following 425-residue polypeptide: Serine--tRNA ligase (425 aa).

231 to 233 (TAE) contacts L-serine. 262–264 (RSE) provides a ligand contact to ATP. Glu285 serves as a coordination point for L-serine. 349–352 (EISS) provides a ligand contact to ATP. Residue Ser385 participates in L-serine binding.

Belongs to the class-II aminoacyl-tRNA synthetase family. Type-1 seryl-tRNA synthetase subfamily. As to quaternary structure, homodimer. The tRNA molecule binds across the dimer.

The protein localises to the cytoplasm. The catalysed reaction is tRNA(Ser) + L-serine + ATP = L-seryl-tRNA(Ser) + AMP + diphosphate + H(+). It catalyses the reaction tRNA(Sec) + L-serine + ATP = L-seryl-tRNA(Sec) + AMP + diphosphate + H(+). It participates in aminoacyl-tRNA biosynthesis; selenocysteinyl-tRNA(Sec) biosynthesis; L-seryl-tRNA(Sec) from L-serine and tRNA(Sec): step 1/1. In terms of biological role, catalyzes the attachment of serine to tRNA(Ser). Is also able to aminoacylate tRNA(Sec) with serine, to form the misacylated tRNA L-seryl-tRNA(Sec), which will be further converted into selenocysteinyl-tRNA(Sec). This is Serine--tRNA ligase from Bartonella henselae (strain ATCC 49882 / DSM 28221 / CCUG 30454 / Houston 1) (Rochalimaea henselae).